We begin with the raw amino-acid sequence, 116 residues long: T cell receptor alpha variable 14/delta variable 4 (116 aa).

Positions 1–21 are cleaved as a signal peptide; that stretch reads MSLSSLLKVVTASLWLGPGIA. Residues 22–116 enclose the Ig-like domain; the sequence is QKITQTQPGM…SAMYFCAMRE (95 aa). Cysteine 43 and cysteine 112 are disulfide-bonded. N-linked (GlcNAc...) asparagine glycosylation occurs at asparagine 78.

As to quaternary structure, alpha-beta TR is a heterodimer composed of an alpha and beta chain; disulfide-linked. The alpha-beta TR is associated with the transmembrane signaling CD3 coreceptor proteins to form the TR-CD3 (TcR or TCR). The assembly of alpha-beta TR heterodimers with CD3 occurs in the endoplasmic reticulum where a single alpha-beta TR heterodimer associates with one CD3D-CD3E heterodimer, one CD3G-CD3E heterodimer and one CD247 homodimer forming a stable octameric structure. CD3D-CD3E and CD3G-CD3E heterodimers preferentially associate with TR alpha and TR beta chains, respectively. The association of the CD247 homodimer is the last step of TcR assembly in the endoplasmic reticulum and is required for transport to the cell surface.

It is found in the cell membrane. In terms of biological role, v region of the variable domain of T cell receptor (TR) alpha chain that participates in the antigen recognition. Alpha-beta T cell receptors are antigen specific receptors which are essential to the immune response and are present on the cell surface of T lymphocytes. Recognize peptide-major histocompatibility (MH) (pMH) complexes that are displayed by antigen presenting cells (APC), a prerequisite for efficient T cell adaptive immunity against pathogens. Binding of alpha-beta TR to pMH complex initiates TR-CD3 clustering on the cell surface and intracellular activation of LCK that phosphorylates the ITAM motifs of CD3G, CD3D, CD3E and CD247 enabling the recruitment of ZAP70. In turn ZAP70 phosphorylates LAT, which recruits numerous signaling molecules to form the LAT signalosome. The LAT signalosome propagates signal branching to three major signaling pathways, the calcium, the mitogen-activated protein kinase (MAPK) kinase and the nuclear factor NF-kappa-B (NF-kB) pathways, leading to the mobilization of transcription factors that are critical for gene expression and essential for T cell growth and differentiation. The T cell repertoire is generated in the thymus, by V-(D)-J rearrangement. This repertoire is then shaped by intrathymic selection events to generate a peripheral T cell pool of self-MH restricted, non-autoaggressive T cells. Post-thymic interaction of alpha-beta TR with the pMH complexes shapes TR structural and functional avidity. In Homo sapiens (Human), this protein is T cell receptor alpha variable 14/delta variable 4.